We begin with the raw amino-acid sequence, 483 residues long: 6-phosphogluconate dehydrogenase, decarboxylating 1 (483 aa).

NADP(+) is bound by residues 11 to 16, 34 to 36, 78 to 80, and asparagine 106; these read GLAVMG, NRT, and VKA. Substrate is bound by residues asparagine 106 and 132 to 134; that span reads SGG. The active-site Proton acceptor is lysine 186. 189 to 190 is a binding site for substrate; sequence HN. Glutamate 193 functions as the Proton donor in the catalytic mechanism. Tyrosine 194, lysine 264, arginine 291, arginine 454, and histidine 460 together coordinate substrate.

This sequence belongs to the 6-phosphogluconate dehydrogenase family. Homodimer.

The protein resides in the cytoplasm. It catalyses the reaction 6-phospho-D-gluconate + NADP(+) = D-ribulose 5-phosphate + CO2 + NADPH. It participates in carbohydrate degradation; pentose phosphate pathway; D-ribulose 5-phosphate from D-glucose 6-phosphate (oxidative stage): step 3/3. In terms of biological role, catalyzes the oxidative decarboxylation of 6-phosphogluconate to ribulose 5-phosphate and CO(2), with concomitant reduction of NADP to NADPH. The polypeptide is 6-phosphogluconate dehydrogenase, decarboxylating 1 (pgdC) (Spinacia oleracea (Spinach)).